The primary structure comprises 360 residues: UPF0324 membrane protein DVU_0123 (360 aa).

Helical transmembrane passes span 20 to 42, 57 to 79, 100 to 122, 142 to 164, 171 to 193, 203 to 225, 232 to 254, 278 to 297, 310 to 327, and 337 to 359; these read VTESLPGLLLVCAVALVASFVAP, KDFILAIIFGIIIRNTVGVPAVF, SYSLAGLVSVGAQALVFIAVFLF, AACLAAGMSVCGVSATIAIAPAV, MAYSIAVVLMFGLLALIAFPLIG, FGAFAGVGIVNSAQVLAAGFGFS, AGIYNIGRVVFLPFVVLMLAIMA, FPLFVLGFLAIVCLNTAGVL, EWAFLLGFASIGLTTRLS, and FLFGFGVAGLKAALALAAVLLFM.

The protein belongs to the UPF0324 family.

The protein resides in the cell membrane. The sequence is that of UPF0324 membrane protein DVU_0123 from Nitratidesulfovibrio vulgaris (strain ATCC 29579 / DSM 644 / CCUG 34227 / NCIMB 8303 / VKM B-1760 / Hildenborough) (Desulfovibrio vulgaris).